Here is a 196-residue protein sequence, read N- to C-terminus: Protein GrpE (196 aa).

The interval 1-24 is disordered; the sequence is MAENERTTENFQPQDPSYAEAATT.

The protein belongs to the GrpE family. Homodimer.

The protein resides in the cytoplasm. In terms of biological role, participates actively in the response to hyperosmotic and heat shock by preventing the aggregation of stress-denatured proteins, in association with DnaK and GrpE. It is the nucleotide exchange factor for DnaK and may function as a thermosensor. Unfolded proteins bind initially to DnaJ; upon interaction with the DnaJ-bound protein, DnaK hydrolyzes its bound ATP, resulting in the formation of a stable complex. GrpE releases ADP from DnaK; ATP binding to DnaK triggers the release of the substrate protein, thus completing the reaction cycle. Several rounds of ATP-dependent interactions between DnaJ, DnaK and GrpE are required for fully efficient folding. This is Protein GrpE from Gloeobacter violaceus (strain ATCC 29082 / PCC 7421).